A 275-amino-acid polypeptide reads, in one-letter code: Catechol 1,2-dioxygenase 2 (275 aa).

Residues Tyr158, Tyr192, His216, and His218 each contribute to the Fe cation site.

It belongs to the intradiol ring-cleavage dioxygenase family. As to quaternary structure, homodimer. Requires Fe(3+) as cofactor.

It carries out the reaction catechol + O2 = cis,cis-muconate + 2 H(+). It functions in the pathway aromatic compound metabolism; beta-ketoadipate pathway; 5-oxo-4,5-dihydro-2-furylacetate from catechol: step 1/3. Functionally, can cleave 4-methyl-, 4-chloro-, and 3-methoxycatechol at lower rates than catechol, but has no activity with 4-nitrocatechol or protocatechuic acid. In Acinetobacter lwoffii, this protein is Catechol 1,2-dioxygenase 2 (catA2).